We begin with the raw amino-acid sequence, 189 residues long: Peptidyl-tRNA hydrolase (189 aa).

TRNA is bound at residue Tyr14. The Proton acceptor role is filled by His19. TRNA is bound by residues Tyr64, Asn66, and Asn112.

It belongs to the PTH family. In terms of assembly, monomer.

It is found in the cytoplasm. It catalyses the reaction an N-acyl-L-alpha-aminoacyl-tRNA + H2O = an N-acyl-L-amino acid + a tRNA + H(+). In terms of biological role, hydrolyzes ribosome-free peptidyl-tRNAs (with 1 or more amino acids incorporated), which drop off the ribosome during protein synthesis, or as a result of ribosome stalling. Functionally, catalyzes the release of premature peptidyl moieties from peptidyl-tRNA molecules trapped in stalled 50S ribosomal subunits, and thus maintains levels of free tRNAs and 50S ribosomes. This is Peptidyl-tRNA hydrolase from Dehalococcoides mccartyi (strain CBDB1).